The chain runs to 318 residues: Deacetoxycephalosporin C hydroxylase (318 aa).

A Fe2OG dioxygenase domain is found at 158–271 (DADPVLRLRY…RTSSVFFLRP (114 aa)).

This sequence belongs to the iron/ascorbate-dependent oxidoreductase family. Monomer. Fe cation is required as a cofactor.

It carries out the reaction deacetoxycephalosporin C + 2-oxoglutarate + O2 = deacetylcephalosporin C + succinate + CO2. It participates in antibiotic biosynthesis; cephalosporin C biosynthesis. Hydroxylation of desacetoxicephalosporin C in 3'position to form deacetylcephalosporin C. The polypeptide is Deacetoxycephalosporin C hydroxylase (cefF) (Streptomyces clavuligerus).